Consider the following 114-residue polypeptide: Ribosome-binding factor A (114 aa).

It belongs to the RbfA family. In terms of assembly, monomer. Binds 30S ribosomal subunits, but not 50S ribosomal subunits or 70S ribosomes.

It localises to the cytoplasm. Functionally, one of several proteins that assist in the late maturation steps of the functional core of the 30S ribosomal subunit. Associates with free 30S ribosomal subunits (but not with 30S subunits that are part of 70S ribosomes or polysomes). Required for efficient processing of 16S rRNA. May interact with the 5'-terminal helix region of 16S rRNA. The polypeptide is Ribosome-binding factor A (Listeria monocytogenes serotype 4b (strain F2365)).